A 448-amino-acid polypeptide reads, in one-letter code: Exoglucanase GH7B (448 aa).

The signal sequence occupies residues Met1–Gly17. Gln18 bears the Pyrrolidone carboxylic acid mark. Disulfide bonds link Cys62-Cys83 and Cys73-Cys79. Residues Tyr97, Asp119–Ile120, and Lys197 contribute to the substrate site. 6 disulfides stabilise this stretch: Cys154–Cys415, Cys188–Cys226, Cys192–Cys225, Cys246–Cys271, Cys254–Cys259, and Cys276–Cys350. Glu228 functions as the Nucleophile in the catalytic mechanism. Substrate is bound by residues Asp230–Glu233 and His244. The active-site Proton donor/acceptor is the Glu233. 2 residues coordinate substrate: Arg266 and Asp274. 2 residues coordinate substrate: Trp396 and Arg412.

This sequence belongs to the glycosyl hydrolase 7 (cellulase C) family. As to quaternary structure, monomer. In terms of tissue distribution, highly expressed in the hepatopancreas (at protein level). Little or no expression detected in the hindgut or the rest of the body (at protein level).

The protein localises to the secreted. It carries out the reaction Hydrolysis of (1-&gt;4)-beta-D-glucosidic linkages in cellulose and cellotetraose, releasing cellobiose from the non-reducing ends of the chains.. Its function is as follows. Exocellobiohydrolase (CBH) that catalyzes the hydrolysis of 1,4-beta-D-glucosidic bonds in cellulose to release the disaccharide cellobiose. The degradation of cellulose involves an interplay between different cellulolytic enzymes. Hydrolysis starts with endoglucanases (EGs), which cut internal beta-1,4-glucosidic bonds in cellulose to reduce the polymerization degree of the substrate and create new chain ends for exocellobiohydrolases (CBHs). The CBHs release the disaccharide cellobiose from the non-reducing end of the cellulose polymer chain. Finally, beta-1,4-glucosidases hydrolyze the cellobiose and other short cello-oligosaccharides into glucose units. The polypeptide is Exoglucanase GH7B (Limnoria quadripunctata (Gribble)).